The sequence spans 290 residues: Polyamine aminopropyltransferase (290 aa).

The region spanning 5 to 238 (QLWYEKLHSS…GIMTFAWASE (234 aa)) is the PABS domain. Gln-33 contacts S-methyl-5'-thioadenosine. Residues His-64 and Asp-88 each contribute to the spermidine site. S-methyl-5'-thioadenosine contacts are provided by residues Glu-108 and 140-141 (DG). The active-site Proton acceptor is Asp-158. Residue 158-161 (DSTD) participates in spermidine binding. S-methyl-5'-thioadenosine is bound at residue Pro-165.

It belongs to the spermidine/spermine synthase family. In terms of assembly, homodimer or homotetramer.

Its subcellular location is the cytoplasm. It catalyses the reaction S-adenosyl 3-(methylsulfanyl)propylamine + putrescine = S-methyl-5'-thioadenosine + spermidine + H(+). It functions in the pathway amine and polyamine biosynthesis; spermidine biosynthesis; spermidine from putrescine: step 1/1. In terms of biological role, catalyzes the irreversible transfer of a propylamine group from the amino donor S-adenosylmethioninamine (decarboxy-AdoMet) to putrescine (1,4-diaminobutane) to yield spermidine. In Hamiltonella defensa subsp. Acyrthosiphon pisum (strain 5AT), this protein is Polyamine aminopropyltransferase.